The primary structure comprises 536 residues: Anthranilate synthase component 1 2 (536 aa).

L-tryptophan is bound by residues serine 59 and 299 to 301; that span reads PYM. A chorismate-binding site is contributed by 334–335; it reads GT. Residue glutamate 361 participates in Mg(2+) binding. Chorismate contacts are provided by residues tyrosine 449, arginine 469, 487 to 489, and glycine 489; that span reads GAG. Glutamate 502 contacts Mg(2+).

It belongs to the anthranilate synthase component I family. In terms of assembly, tetramer of two components I and two components II. It depends on Mg(2+) as a cofactor.

The enzyme catalyses chorismate + L-glutamine = anthranilate + pyruvate + L-glutamate + H(+). Its pathway is amino-acid biosynthesis; L-tryptophan biosynthesis; L-tryptophan from chorismate: step 1/5. This chain is Anthranilate synthase component 1 2 (trpE2), found in Haloarcula marismortui (strain ATCC 43049 / DSM 3752 / JCM 8966 / VKM B-1809) (Halobacterium marismortui).